We begin with the raw amino-acid sequence, 208 residues long: Holliday junction resolvase RecU (208 aa).

Positions 87, 89, 102, and 121 each coordinate Mg(2+).

Belongs to the RecU family. Mg(2+) is required as a cofactor.

Its subcellular location is the cytoplasm. It carries out the reaction Endonucleolytic cleavage at a junction such as a reciprocal single-stranded crossover between two homologous DNA duplexes (Holliday junction).. Functionally, endonuclease that resolves Holliday junction intermediates in genetic recombination. Cleaves mobile four-strand junctions by introducing symmetrical nicks in paired strands. Promotes annealing of linear ssDNA with homologous dsDNA. Required for DNA repair, homologous recombination and chromosome segregation. The chain is Holliday junction resolvase RecU from Staphylococcus aureus (strain Mu3 / ATCC 700698).